A 390-amino-acid chain; its full sequence is Succinate--CoA ligase [ADP-forming] subunit beta (390 aa).

The ATP-grasp domain occupies 9-245; sequence KHLLKKYNIP…TTQEDEHETM (237 aa). Residues Lys-46, 53-55, Glu-99, Ser-102, and Glu-107 contribute to the ATP site; that span reads GRG. Mg(2+) contacts are provided by Asn-200 and Asp-214. Substrate contacts are provided by residues Asn-265 and 322–324; that span reads GIV.

This sequence belongs to the succinate/malate CoA ligase beta subunit family. Heterotetramer of two alpha and two beta subunits. It depends on Mg(2+) as a cofactor.

It catalyses the reaction succinate + ATP + CoA = succinyl-CoA + ADP + phosphate. It carries out the reaction GTP + succinate + CoA = succinyl-CoA + GDP + phosphate. It participates in carbohydrate metabolism; tricarboxylic acid cycle; succinate from succinyl-CoA (ligase route): step 1/1. Functionally, succinyl-CoA synthetase functions in the citric acid cycle (TCA), coupling the hydrolysis of succinyl-CoA to the synthesis of either ATP or GTP and thus represents the only step of substrate-level phosphorylation in the TCA. The beta subunit provides nucleotide specificity of the enzyme and binds the substrate succinate, while the binding sites for coenzyme A and phosphate are found in the alpha subunit. The protein is Succinate--CoA ligase [ADP-forming] subunit beta of Coxiella burnetii (strain CbuG_Q212) (Coxiella burnetii (strain Q212)).